Consider the following 1160-residue polypeptide: Major DNA-binding protein (1160 aa).

Positions 808–809 (FW) match the Required for filament formation motif. A required for nuclear localization region spans residues 1139 to 1160 (ARGGEHAFDEDCGLLPAKRGRL).

It belongs to the herpesviridae major DNA-binding protein family. In terms of assembly, homooligomers. Forms double-helical filaments necessary for the formation of replication compartments within the host nucleus. Interacts with the origin-binding protein. Interacts with the helicase primase complex; this interaction stimulates primer synthesis activity of the helicase-primase complex. Interacts with the DNA polymerase. Interacts with the alkaline exonuclease; this interaction increases its nuclease processivity.

It localises to the host nucleus. Single-stranded DNA-binding protein required for DNA replication. Its function is as follows. Plays several crucial roles in viral infection. Participates in the opening of the viral DNA origin to initiate replication by interacting with the origin-binding protein. May disrupt loops, hairpins and other secondary structures present on ssDNA to reduce and eliminate pausing of viral DNA polymerase at specific sites during elongation. Promotes viral DNA recombination by performing strand-transfer, characterized by the ability to transfer a DNA strand from a linear duplex to a complementary single-stranded DNA circle. Can also catalyze the renaturation of complementary single strands. Additionally, reorganizes the host cell nucleus, leading to the formation of prereplicative sites and replication compartments. This process is driven by the protein which can form double-helical filaments in the absence of DNA. In Simian cytomegalovirus (strain Colburn), this protein is Major DNA-binding protein.